Consider the following 208-residue polypeptide: MKLLPSVMLKLFLAAVLSALVTGESLERLRRGLAAATSNPDPPTGSTNQLLPTGGDRAQGVQDLEGTDLNLFKVAFSSKPQGLATPSKERNGKKKKKGKGLGKKRDPCLRKYKDYCIHGECRYLQEFRTPSCKCLPGYHGHRCHGLTLPVENPLYTYDHTTVLAVVAVVLSSVCLLVIVGLLMFRYHRRGGYDLESEEKVKLGVASSH.

A signal peptide spans 1-23 (MKLLPSVMLKLFLAAVLSALVTG). Positions 24–62 (ESLERLRRGLAAATSNPDPPTGSTNQLLPTGGDRAQGVQ) are excised as a propeptide. Residues 24-160 (ESLERLRRGL…ENPLYTYDHT (137 aa)) lie on the Extracellular side of the membrane. 2 disordered regions span residues 35–57 (AATS…GGDR) and 80–104 (PQGL…LGKK). Polar residues predominate over residues 36 to 51 (ATSNPDPPTGSTNQLL). O-linked (GalNAc...) threonine glycosylation occurs at T85. A compositionally biased stretch (basic residues) spans 91–102 (NGKKKKKGKGLG). Residues 104–144 (KRDPCLRKYKDYCIHGECRYLQEFRTPSCKCLPGYHGHRCH) form the EGF-like domain. Cystine bridges form between C108–C121, C116–C132, and C134–C143. A propeptide spans 149-208 (PVENPLYTYDHTTVLAVVAVVLSSVCLLVIVGLLMFRYHRRGGYDLESEEKVKLGVASSH) (C-terminal). The helical transmembrane segment at 161 to 184 (TVLAVVAVVLSSVCLLVIVGLLMF) threads the bilayer. Residues 185-208 (RYHRRGGYDLESEEKVKLGVASSH) are Cytoplasmic-facing.

As to quaternary structure, interacts with FBLN1. Interacts with EGFR and ERBB4. In terms of processing, O-glycosylated. As to expression, most abundant in kidney, skeletal muscle, lung, spleen, brain and heart.

Its subcellular location is the secreted. The protein localises to the extracellular space. It is found in the cell membrane. Its function is as follows. Growth factor that mediates its effects via EGFR, ERBB2 and ERBB4. Required for normal cardiac valve formation and normal heart function. Promotes smooth muscle cell proliferation. May be involved in macrophage-mediated cellular proliferation. It is mitogenic for fibroblasts, but not endothelial cells. It is able to bind EGF receptor/EGFR with higher affinity than EGF itself and is a far more potent mitogen for smooth muscle cells than EGF. Also acts as a diphtheria toxin receptor. This is Proheparin-binding EGF-like growth factor (Hbegf) from Mus musculus (Mouse).